We begin with the raw amino-acid sequence, 288 residues long: Protoheme IX farnesyltransferase (288 aa).

A run of 9 helical transmembrane segments spans residues 8–28 (ATKP…FLLA), 35–55 (YLIF…GCVL), 80–100 (ISIL…IYLL), 107–127 (LTML…TKCM), 132–152 (IYST…GYCA), 162–182 (LLLL…IAIL), 208–228 (IVIY…SGYT), 229–249 (TSYQ…YLAL), and 266–286 (FIFS…DSIF).

Belongs to the UbiA prenyltransferase family. Protoheme IX farnesyltransferase subfamily.

The protein localises to the cell membrane. The enzyme catalyses heme b + (2E,6E)-farnesyl diphosphate + H2O = Fe(II)-heme o + diphosphate. The protein operates within porphyrin-containing compound metabolism; heme O biosynthesis; heme O from protoheme: step 1/1. Converts heme B (protoheme IX) to heme O by substitution of the vinyl group on carbon 2 of heme B porphyrin ring with a hydroxyethyl farnesyl side group. The polypeptide is Protoheme IX farnesyltransferase (Baumannia cicadellinicola subsp. Homalodisca coagulata).